Consider the following 150-residue polypeptide: Lymphocyte antigen 6 complex locus protein G5c (150 aa).

The first 41 residues, 1-41, serve as a signal peptide directing secretion; sequence MRFMAGPAGSQSLGPLCFHSSPQALYTVLLIVLVMMSLVFG. The 91-residue stretch at 60–150 folds into the UPAR/Ly6 domain; it reads LRCYRCLLET…DPQNRGLYTP (91 aa). Disulfide bonds link cysteine 62/cysteine 89, cysteine 65/cysteine 74, cysteine 81/cysteine 107, and cysteine 134/cysteine 139. Asparagine 96 carries N-linked (GlcNAc...) asparagine glycosylation.

Forms oligomers. In terms of processing, N-glycosylated. As to expression, detected in T-cell lines and fetal and adult lung.

Its subcellular location is the secreted. May have a role in hematopoietic cell differentiation. This is Lymphocyte antigen 6 complex locus protein G5c (LY6G5C) from Homo sapiens (Human).